The chain runs to 530 residues: Inactive ubiquitin carboxyl-terminal hydrolase 17-like protein 7 (530 aa).

Residues 80–375 form the USP domain; it reads AGLQKIGNTF…QAYVLFYIQK (296 aa). Basic and acidic residues predominate over residues 382–392; it reads SESVSRGREPR. 3 disordered regions span residues 382–412, 431–454, and 490–530; these read SESV…KRDH, ESTL…NVRK, and SSTK…LVCQ. A compositionally biased stretch (polar residues) spans 490–512; it reads SSTKPTDQESMNTGTLASLQGST. Residues 513–524 show a composition bias toward basic residues; sequence RRSKGNNKHSKR.

It belongs to the peptidase C19 family. USP17 subfamily.

The protein localises to the nucleus. It is found in the endoplasmic reticulum. This chain is Inactive ubiquitin carboxyl-terminal hydrolase 17-like protein 7 (USP17L7), found in Homo sapiens (Human).